The primary structure comprises 165 residues: Regulator of ribonuclease activity A (165 aa).

Belongs to the RraA family. In terms of assembly, homotrimer. Binds to both RNA-binding sites in the C-terminal region of Rne and to RhlB.

It localises to the cytoplasm. Functionally, globally modulates RNA abundance by binding to RNase E (Rne) and regulating its endonucleolytic activity. Can modulate Rne action in a substrate-dependent manner by altering the composition of the degradosome. Modulates RNA-binding and helicase activities of the degradosome. This Haemophilus ducreyi (strain 35000HP / ATCC 700724) protein is Regulator of ribonuclease activity A.